The chain runs to 541 residues: Putative apolipoprotein N-acyltransferase (541 aa).

A run of 6 helical transmembrane segments spans residues 31–51 (PLPA…AAHA), 65–85 (GWLF…VSMH), 89–109 (GLAA…LALF), 144–164 (AACW…FPWL), 181–201 (LLGV…LAGL), and 215–235 (LAAG…QFSW). One can recognise a CN hydrolase domain in the interval 248 to 511 (VQGNVEQSQK…AGVLPVAVQG (264 aa)). Glutamate 292 acts as the Proton acceptor in catalysis. Lysine 366 is an active-site residue. Catalysis depends on cysteine 416, which acts as the Nucleophile.

Belongs to the CN hydrolase family. Apolipoprotein N-acyltransferase subfamily.

The protein localises to the cell inner membrane. The enzyme catalyses N-terminal S-1,2-diacyl-sn-glyceryl-L-cysteinyl-[lipoprotein] + a glycerophospholipid = N-acyl-S-1,2-diacyl-sn-glyceryl-L-cysteinyl-[lipoprotein] + a 2-acyl-sn-glycero-3-phospholipid + H(+). It functions in the pathway protein modification; lipoprotein biosynthesis (N-acyl transfer). Functionally, catalyzes the phospholipid dependent N-acylation of the N-terminal cysteine of apolipoprotein, the last step in lipoprotein maturation. This Bordetella parapertussis (strain 12822 / ATCC BAA-587 / NCTC 13253) protein is Putative apolipoprotein N-acyltransferase.